The chain runs to 270 residues: Putative pyruvate, phosphate dikinase regulatory protein (270 aa).

Position 151–158 (151–158) interacts with ADP; that stretch reads GVSRTSKT.

The protein belongs to the pyruvate, phosphate/water dikinase regulatory protein family. PDRP subfamily.

It carries out the reaction N(tele)-phospho-L-histidyl/L-threonyl-[pyruvate, phosphate dikinase] + ADP = N(tele)-phospho-L-histidyl/O-phospho-L-threonyl-[pyruvate, phosphate dikinase] + AMP + H(+). The enzyme catalyses N(tele)-phospho-L-histidyl/O-phospho-L-threonyl-[pyruvate, phosphate dikinase] + phosphate + H(+) = N(tele)-phospho-L-histidyl/L-threonyl-[pyruvate, phosphate dikinase] + diphosphate. Bifunctional serine/threonine kinase and phosphorylase involved in the regulation of the pyruvate, phosphate dikinase (PPDK) by catalyzing its phosphorylation/dephosphorylation. The polypeptide is Putative pyruvate, phosphate dikinase regulatory protein (Streptococcus gordonii (strain Challis / ATCC 35105 / BCRC 15272 / CH1 / DL1 / V288)).